The chain runs to 672 residues: DNA ligase (672 aa).

NAD(+)-binding positions include 32-36, 81-82, and glutamate 114; these read DSEYD and SL. The active-site N6-AMP-lysine intermediate is lysine 116. 4 residues coordinate NAD(+): arginine 137, glutamate 174, lysine 291, and lysine 315. Cysteine 409, cysteine 412, cysteine 427, and cysteine 433 together coordinate Zn(2+). Residues 592–672 form the BRCT domain; it reads VNENPFKEKT…EFLEIVNSFS (81 aa).

This sequence belongs to the NAD-dependent DNA ligase family. LigA subfamily. Requires Mg(2+) as cofactor. Mn(2+) is required as a cofactor.

The enzyme catalyses NAD(+) + (deoxyribonucleotide)n-3'-hydroxyl + 5'-phospho-(deoxyribonucleotide)m = (deoxyribonucleotide)n+m + AMP + beta-nicotinamide D-nucleotide.. DNA ligase that catalyzes the formation of phosphodiester linkages between 5'-phosphoryl and 3'-hydroxyl groups in double-stranded DNA using NAD as a coenzyme and as the energy source for the reaction. It is essential for DNA replication and repair of damaged DNA. This Actinobacillus succinogenes (strain ATCC 55618 / DSM 22257 / CCUG 43843 / 130Z) protein is DNA ligase.